The chain runs to 78 residues: Beta-defensin 105A (78 aa).

An N-terminal signal peptide occupies residues 1 to 27; the sequence is MALIRKTFYFVFAVFFILVQQPSGCQA. Intrachain disulfides connect Cys-43/Cys-74, Cys-53/Cys-67, and Cys-57/Cys-73.

Belongs to the beta-defensin family.

The protein resides in the secreted. Its function is as follows. Has antimicrobial activity. In Macaca fascicularis (Crab-eating macaque), this protein is Beta-defensin 105A (DEFB105A).